Reading from the N-terminus, the 331-residue chain is MPCPTGVTRCSAGVSSLARCLHTCPVLEGVTKANLSKLRKKTGFTFVNCRKALEKFENDLEQAEKWLKEQAQKEGWAKATKLQDRQTAQGLVGVAQEGTMATMVEVNCETDFVARNPKFRQLVTQVAMATLGDVKAHPQWTLGWLKALHTGEELKQLQIGDTTLGDLTALTIGTLGENIQIRRAMYYSVPPIPTKHVGVYVHAPVAGTTGGQSGSCALGKYGALVAFRRKNTEFQNFNAAELGRRLGQHVVGMSPLTVGEMPEVREEEGEKKDGDKQDEEERSTDSDEDETQMLRQTFLLDPTMTVGEMTRQQGIELLDFVRFECGEVEES.

The tract at residues 254–295 (SPLTVGEMPEVREEEGEKKDGDKQDEEERSTDSDEDETQMLR) is disordered. Positions 262–275 (PEVREEEGEKKDGD) are enriched in basic and acidic residues. Positions 276-291 (KQDEEERSTDSDEDET) are enriched in acidic residues.

The protein belongs to the EF-Ts family.

It localises to the mitochondrion. Its function is as follows. Associates with the EF-Tu.GDP complex and induces the exchange of GDP to GTP. It remains bound to the aminoacyl-tRNA.EF-Tu.GTP complex up to the GTP hydrolysis stage on the ribosome. The polypeptide is Elongation factor Ts, mitochondrial (Branchiostoma floridae (Florida lancelet)).